The chain runs to 1513 residues: Mucin-2 (1513 aa).

An N-terminal signal peptide occupies residues 1–20; that stretch reads MGLPLARLVAVCLVLALAKG. The 173-residue stretch at 32–204 folds into the VWFD 1 domain; it reads HVCSTWGDFH…KINKPEVVCE (173 aa). Cystine bridges form between Cys34–Cys166, Cys56–Cys203, Cys64–Cys163, Cys215–Cys252, Cys222–Cys247, Cys234–Cys272, Cys254–Cys260, Cys262–Cys288, Cys292–Cys326, Cys309–Cys348, Cys328–Cys342, Cys350–Cys372, Cys367–Cys384, Cys370–Cys379, Cys388–Cys525, Cys410–Cys560, Cys432–Cys440, Cys571–Cys616, Cys585–Cys611, Cys598–Cys636, Cys618–Cys624, Cys626–Cys651, Cys658–Cys695, Cys671–Cys685, Cys675–Cys715, Cys697–Cys709, Cys717–Cys739, and Cys737–Cys746. Asp46 contacts Ca(2+). Met143 and Met151 together coordinate Cu(+). Position 153 (Glu153) interacts with Cu(2+). N-linked (GlcNAc...) asparagine glycosylation occurs at Asn160. Ca(2+) contacts are provided by Asp168, Asn170, and Glu177. Cu(2+) is bound by residues His274 and His321. Residues 292–348 form the TIL domain; it reads CPGNMVYLESGSPWLDTCSHLEVSSLCEEHYMDGCFCPEGTVYDDITGSGCIPVSQC. Met323 is a binding site for Cu(+). The VWFC domain maps to 350-410; the sequence is CKLHGHLYMP…GKKFTFHGDC (61 aa). The VWFD 2 domain maps to 386-561; the sequence is ETCALEGGSH…NTWKAQSSCH (176 aa). Residue Asp400 coordinates Ca(2+). An N-linked (GlcNAc...) asparagine glycan is attached at Asn420. Residues Asn527, Asn529, Leu531, Asp534, and Asp535 each contribute to the Ca(2+) site. The N-linked (GlcNAc...) asparagine glycan is linked to Asn667. A glycan (N-linked (GlcNAc...) asparagine) is linked at Asn767. 21 disulfide bridges follow: Cys781/Cys817, Cys799/Cys811, Cys819/Cys842, Cys836/Cys854, Cys840/Cys849, Cys858/Cys989, Cys880/Cys1024, Cys889/Cys986, Cys906/Cys913, Cys1034/Cys1077, Cys1048/Cys1072, Cys1059/Cys1099, Cys1079/Cys1087, Cys1089/Cys1114, Cys1105/Cys1134, Cys1118/Cys1160, Cys1142/Cys1184, Cys1164/Cys1178, Cys1186/Cys1210, Cys1205/Cys1235, and Cys1208/Cys1218. A glycan (N-linked (GlcNAc...) asparagine) is linked at Asn837. Residues 856–1025 form the VWFD 3 domain; the sequence is STCSIYGSGH…NSWKEASTCP (170 aa). Asp870 lines the Ca(2+) pocket. Asn892 is a glycosylation site (N-linked (GlcNAc...) asparagine). Ca(2+) contacts are provided by Asn991, Asp993, Asn998, and Asp999. N-linked (GlcNAc...) asparagine glycans are attached at residues Asn1136 and Asn1151. Asn1212, Asn1227, and Asn1243 each carry an N-linked (GlcNAc...) asparagine glycan. O-linked (GalNAc) threonine glycosylation is found at Thr1264, Thr1267, Thr1268, and Thr1280. An O-linked (GalNAc) serine glycan is attached at Ser1286. A glycan (O-linked (GalNAc) threonine) is linked at Thr1290. 6 residues coordinate Ca(2+): Asn1303, His1306, Ser1309, Gly1313, Asp1314, and Glu1316. A glycan (N-linked (GlcNAc...) asparagine) is linked at Asn1350. Positions 1373 and 1374 each coordinate Ca(2+). 11 repeat units span residues 1392–1407, 1408–1423, 1424–1434, 1435–1445, 1446–1456, 1457–1467, 1468–1478, 1479–1489, 1490–1500, 1501–1511, and 1512–1513. Residues 1392-1513 are approximate repeats; the sequence is SPTTSTPISS…TSPTTSTTSP (122 aa). The disordered stretch occupies residues 1392-1513; that stretch reads SPTTSTPISS…TSPTTSTTSP (122 aa).

Homomultimer; disulfide-linked. The N- and C-terminus mediate their assembly into higher order structures to form filaments. The CTCK domains of two polypeptides associate in the endoplasmic reticulum to generate intermolecularly disulfide-bonded dimers. These dimers progress to the Golgi apparatus, which is a more acidic environment than the endoplasmic reticulum. Under acidic conditions, the N-termini form non-covalent intermolecular interactions that juxtapose assemblies of the third VWD domain (VWD3) from different CTCK-linked dimers. The VWD3 assemblies then become disulfide bonded to one another to produce long, disulfide-linked polymers that remain highly compact until secretion. Interacts with FCGBP. Interacts with AGR2; disulfide-linked. Post-translationally, O-glycosylated. O-glycosylation is required for mucin assembly. Goblet cells synthesize two forms of mucin that differ in branched chain O-glycosylation and the site of production in the colon. In terms of processing, may undergo proteolytic cleavage in the outer mucus layer of the colon, contributing to the expanded volume and loose nature of this layer which allows for bacterial colonization in contrast to the inner mucus layer which is dense and devoid of bacteria. At low pH of 6 and under, undergoes autocatalytic cleavage in vitro in the N-terminal region of the fourth VWD domain. It is likely that this also occurs in vivo and is triggered by the low pH of the late secretory pathway. In terms of tissue distribution, expressed in intestine and airway.

The protein resides in the secreted. Functionally, coats the epithelia of the intestines and other mucus membrane-containing organs to provide a protective, lubricating barrier against particles and infectious agents at mucosal surfaces. Major constituent of the colon mucus, which is mainly formed by large polymeric networks of MUC2 secreted by goblet cells that cover the exposed surfaces of intestine. MUC2 networks form hydrogels that guard the underlying epithelium from pathogens and other hazardous matter entering from the outside world, while permitting nutrient absorption and gas exchange. Acts as a divalent copper chaperone that protects intestinal cells from copper toxicity and facilitates nutritional copper unptake into cells. Binds both Cu(2+) and its reduced form, Cu(1+), at two juxtaposed binding sites: Cu(2+), once reduced to Cu(1+) by vitamin C (ascorbate) or other dietary antioxidants, transits to the other binding site. MUC2-bound Cu(1+) is protected from oxidation in aerobic environments, and can be released for nutritional delivery to cells. Mucin gels store antimicrobial molecules that participate in innate immunity. Mucin glycoproteins also house and feed the microbiome, lubricate tissue surfaces, and may facilitate the removal of contaminants and waste products from the body. Goblet cells synthesize two forms of MUC2 mucin that differ in branched chain O-glycosylation and the site of production in the colon: a (1) 'thick' mucus that wraps the microbiota to form fecal pellets is produced in the proximal, ascending colon. 'Thick' mucus transits along the descending colon and is lubricated by a (2) 'thin' MUC2 mucus produced in the distal colon which adheres to the 'thick' mucus. In Rattus norvegicus (Rat), this protein is Mucin-2.